Reading from the N-terminus, the 103-residue chain is NAD(P)H-quinone oxidoreductase subunit 4L (103 aa).

3 helical membrane passes run 5–25 (LQYC…GLIT), 32–52 (VLMS…GFSN), and 66–86 (IFVI…VLAI).

The protein belongs to the complex I subunit 4L family. In terms of assembly, NDH-1 can be composed of about 15 different subunits; different subcomplexes with different compositions have been identified which probably have different functions.

It is found in the cellular thylakoid membrane. It carries out the reaction a plastoquinone + NADH + (n+1) H(+)(in) = a plastoquinol + NAD(+) + n H(+)(out). It catalyses the reaction a plastoquinone + NADPH + (n+1) H(+)(in) = a plastoquinol + NADP(+) + n H(+)(out). In terms of biological role, NDH-1 shuttles electrons from an unknown electron donor, via FMN and iron-sulfur (Fe-S) centers, to quinones in the respiratory and/or the photosynthetic chain. The immediate electron acceptor for the enzyme in this species is believed to be plastoquinone. Couples the redox reaction to proton translocation, and thus conserves the redox energy in a proton gradient. Cyanobacterial NDH-1 also plays a role in inorganic carbon-concentration. This Synechocystis sp. (strain ATCC 27184 / PCC 6803 / Kazusa) protein is NAD(P)H-quinone oxidoreductase subunit 4L.